The primary structure comprises 132 residues: Sec-independent protein translocase protein TatB (132 aa).

A helical transmembrane segment spans residues 2–22 (FDGIGFMELLLIGILGLVVLG). Polar residues-rich tracts occupy residues 86-95 (LKQAAQSVNR) and 116-132 (IAETPTQSGDTHSKNNG). The segment at 86 to 132 (LKQAAQSVNRPYQLDESNEQEPKIAPPQANIAETPTQSGDTHSKNNG) is disordered.

It belongs to the TatB family. The Tat system comprises two distinct complexes: a TatABC complex, containing multiple copies of TatA, TatB and TatC subunits, and a separate TatA complex, containing only TatA subunits. Substrates initially bind to the TatABC complex, which probably triggers association of the separate TatA complex to form the active translocon.

The protein localises to the cell inner membrane. Part of the twin-arginine translocation (Tat) system that transports large folded proteins containing a characteristic twin-arginine motif in their signal peptide across membranes. Together with TatC, TatB is part of a receptor directly interacting with Tat signal peptides. TatB may form an oligomeric binding site that transiently accommodates folded Tat precursor proteins before their translocation. This chain is Sec-independent protein translocase protein TatB, found in Shewanella denitrificans (strain OS217 / ATCC BAA-1090 / DSM 15013).